The chain runs to 72 residues: Metallothionein-like protein type 2 (72 aa).

It belongs to the metallothionein superfamily. Type 15 family.

Functionally, metallothioneins have a high content of cysteine residues that bind various heavy metals. The sequence is that of Metallothionein-like protein type 2 from Solanum lycopersicum (Tomato).